The sequence spans 415 residues: Phosphoglycerate transport system transcriptional regulatory protein PgtA (415 aa).

Residues 7–121 (SILLIDDDVD…KLLILIEDAL (115 aa)) enclose the Response regulatory domain. The residue at position 56 (aspartate 56) is a 4-aspartylphosphate. Positions 142–341 (LIGRSEWMNQ…LANAAELFAV (200 aa)) constitute a Sigma-54 factor interaction domain. 170–177 (GEHGTGRM) contacts ATP. Residues 385–404 (INEVAEYLQIPRKKLYLRMK) constitute a DNA-binding region (H-T-H motif).

Post-translationally, phosphorylated by PgtB.

It localises to the cytoplasm. Functionally, member of the two-component regulatory system PgtB/PgtA that regulates the inducible phosphoglycerate transport system. When activated by PgtB it acts in conjunction with sigma-54 as a transcriptional activator. This Salmonella typhimurium (strain LT2 / SGSC1412 / ATCC 700720) protein is Phosphoglycerate transport system transcriptional regulatory protein PgtA (pgtA).